We begin with the raw amino-acid sequence, 221 residues long: MSGRRTPGAASDGSAGGQAAVIIAVKRLTAAKTRLAPIFSAATREEVVLAMLVDTITAASTVAPVTVVTPDEVAADAARQLGAGVLADPTPEGHHNPLNNAIMAAEEHLRAGTPNIVVLQGDLPAMQPRELAEALAAARTYPRSFVGDRHGTGTSALFAFGVPLQPRFGADSATHHRHSGAIELTGAWPGLRCDIDTAEDLRTARRLGVGPATAQAIAAHR.

3 residues coordinate phosphoenolpyruvate: T154, G169, and S172.

Belongs to the CofC family.

The catalysed reaction is phosphoenolpyruvate + GTP + H(+) = enolpyruvoyl-2-diphospho-5'-guanosine + diphosphate. It participates in cofactor biosynthesis; coenzyme F420 biosynthesis. Its function is as follows. Guanylyltransferase that catalyzes the activation of phosphoenolpyruvate (PEP) as enolpyruvoyl-2-diphospho-5'-guanosine, via the condensation of PEP with GTP. It is involved in the biosynthesis of coenzyme F420, a hydride carrier cofactor. This chain is Phosphoenolpyruvate guanylyltransferase, found in Mycolicibacterium smegmatis (strain ATCC 700084 / mc(2)155) (Mycobacterium smegmatis).